The following is a 483-amino-acid chain: Glutamyl-tRNA(Gln) amidotransferase subunit A (483 aa).

Residues Lys75 and Ser150 each act as charge relay system in the active site. The active-site Acyl-ester intermediate is Ser174.

The protein belongs to the amidase family. GatA subfamily. Heterotrimer of A, B and C subunits.

It catalyses the reaction L-glutamyl-tRNA(Gln) + L-glutamine + ATP + H2O = L-glutaminyl-tRNA(Gln) + L-glutamate + ADP + phosphate + H(+). Its function is as follows. Allows the formation of correctly charged Gln-tRNA(Gln) through the transamidation of misacylated Glu-tRNA(Gln) in organisms which lack glutaminyl-tRNA synthetase. The reaction takes place in the presence of glutamine and ATP through an activated gamma-phospho-Glu-tRNA(Gln). The polypeptide is Glutamyl-tRNA(Gln) amidotransferase subunit A (Deinococcus geothermalis (strain DSM 11300 / CIP 105573 / AG-3a)).